We begin with the raw amino-acid sequence, 172 residues long: Lipopolysaccharide export system protein LptA (172 aa).

A signal peptide spans 1 to 23 (MKLVSNKILFLATMVLASSSAFA).

This sequence belongs to the LptA family. In terms of assembly, component of the lipopolysaccharide transport and assembly complex.

Its subcellular location is the periplasm. Functionally, involved in the assembly of lipopolysaccharide (LPS). Required for the translocation of LPS from the inner membrane to the outer membrane. May form a bridge between the inner membrane and the outer membrane, via interactions with LptC and LptD, thereby facilitating LPS transfer across the periplasm. This is Lipopolysaccharide export system protein LptA from Haemophilus influenzae (strain ATCC 51907 / DSM 11121 / KW20 / Rd).